Reading from the N-terminus, the 317-residue chain is Olfactory receptor 5AP2 (317 aa).

Topologically, residues 1-32 (MVRSGKGIQNKNATEVTEFILLGLSDNPDLQG) are extracellular. The N-linked (GlcNAc...) asparagine glycan is linked to Asn-12. Residues 33 to 53 (VLFALFLIIYTMTLVGNLGMM) form a helical membrane-spanning segment. Over 54-61 (ALIKIDRS) the chain is Cytoplasmic. The helical transmembrane segment at 62-82 (LHTPMYFFLSSLSFVDASYSS) threads the bilayer. The Extracellular portion of the chain corresponds to 83–106 (SVTPKMLVNLMAEDKSISFNGCAT). Cysteines 104 and 196 form a disulfide. Residues 107–127 (QFFFFGSFLGTECFLLAMMAY) form a helical membrane-spanning segment. Residues 128 to 140 (DRYAAIWNPLLYP) are Cytoplasmic-facing. A helical membrane pass occupies residues 141–161 (VLMSGRICFMLVSTSFLAGFG). Over 162–203 (NAAIHTGMTFRLSFCGSNKINHFYCDTPPLLKLSCSDTHING) the chain is Extracellular. The helical transmembrane segment at 204–224 (IVIMAFSSFNVISCVLIVLIS) threads the bilayer. The Cytoplasmic segment spans residues 225 to 244 (YLCILIAILKMPSAEGRHKA). A helical transmembrane segment spans residues 245-265 (FSTCASHLMAVTIFFGTILFM). Topologically, residues 266-278 (YLRPTSSYSMEQD) are extracellular. A helical membrane pass occupies residues 279–299 (KVVSVFYTVVIPMLNPLIYSL). Topologically, residues 300–317 (KNKDVKKAVKKILHNYVV) are cytoplasmic.

It belongs to the G-protein coupled receptor 1 family.

It is found in the cell membrane. Its function is as follows. Odorant receptor. This chain is Olfactory receptor 5AP2, found in Mus musculus (Mouse).